Here is a 512-residue protein sequence, read N- to C-terminus: Kynurenine 3-monooxygenase (512 aa).

The protein belongs to the aromatic-ring hydroxylase family. KMO subfamily. It depends on FAD as a cofactor.

It localises to the mitochondrion outer membrane. It catalyses the reaction L-kynurenine + NADPH + O2 + H(+) = 3-hydroxy-L-kynurenine + NADP(+) + H2O. It participates in cofactor biosynthesis; NAD(+) biosynthesis; quinolinate from L-kynurenine: step 1/3. Functionally, catalyzes the hydroxylation of L-kynurenine (L-Kyn) to form 3-hydroxy-L-kynurenine (L-3OHKyn). Required for synthesis of quinolinic acid. The chain is Kynurenine 3-monooxygenase (bna4) from Aspergillus clavatus (strain ATCC 1007 / CBS 513.65 / DSM 816 / NCTC 3887 / NRRL 1 / QM 1276 / 107).